The chain runs to 254 residues: Leucyl/phenylalanyl-tRNA--protein transferase (254 aa).

This sequence belongs to the L/F-transferase family.

It localises to the cytoplasm. It carries out the reaction N-terminal L-lysyl-[protein] + L-leucyl-tRNA(Leu) = N-terminal L-leucyl-L-lysyl-[protein] + tRNA(Leu) + H(+). The catalysed reaction is N-terminal L-arginyl-[protein] + L-leucyl-tRNA(Leu) = N-terminal L-leucyl-L-arginyl-[protein] + tRNA(Leu) + H(+). It catalyses the reaction L-phenylalanyl-tRNA(Phe) + an N-terminal L-alpha-aminoacyl-[protein] = an N-terminal L-phenylalanyl-L-alpha-aminoacyl-[protein] + tRNA(Phe). Functions in the N-end rule pathway of protein degradation where it conjugates Leu, Phe and, less efficiently, Met from aminoacyl-tRNAs to the N-termini of proteins containing an N-terminal arginine or lysine. This chain is Leucyl/phenylalanyl-tRNA--protein transferase, found in Burkholderia ambifaria (strain MC40-6).